The primary structure comprises 123 residues: Large ribosomal subunit protein bL12 (123 aa).

The protein belongs to the bacterial ribosomal protein bL12 family. Homodimer. Part of the ribosomal stalk of the 50S ribosomal subunit. Forms a multimeric L10(L12)X complex, where L10 forms an elongated spine to which 2 to 4 L12 dimers bind in a sequential fashion. Binds GTP-bound translation factors.

In terms of biological role, forms part of the ribosomal stalk which helps the ribosome interact with GTP-bound translation factors. Is thus essential for accurate translation. This chain is Large ribosomal subunit protein bL12, found in Zymomonas mobilis subsp. mobilis (strain ATCC 31821 / ZM4 / CP4).